The following is a 951-amino-acid chain: Leucine-rich repeat-containing G-protein coupled receptor 4 (951 aa).

Residues 1–19 (MPGPLGLLCFLALGLRGSA) form the signal peptide. Topologically, residues 20–544 (EPSGAAPPLC…LLGSWMIRLT (525 aa)) are extracellular. The LRRNT domain maps to 25-57 (APPLCAAPCSCDGDRRVDCSGKGLTAVPEGLSA). 2 disulfides stabilise this stretch: Cys-29/Cys-35 and Cys-33/Cys-43. LRR repeat units follow at residues 35–58 (CDGDRRVDCSGKGLTAVPEGLSAF), 59–79 (TQLLDISMNNITQLPEDAFKN), 81–103 (PFLEELRLAGNDLSFIHPKALSG), 104–127 (LKELKVLTLQNNQLKTVPSEAIRG), 128–151 (LSSLQSLRLDANHITSVPEDSFEG), 153–175 (TQLRHLWLDDNSLTEVPVHPLSN), 176–199 (LPTLQALTLALNKISSIPDFAFTN), 201–223 (SSLVVLHLHNNKIKSLGQHCFDG), 224–247 (LDNLETLDLNYNNLGEFPQAIKAL), 248–270 (PSLKELLFHSNSISVIPDGAFDG), and 272–294 (PLLKTIHLYDNPLSFVGNSAFHN). A glycan (N-linked (GlcNAc...) asparagine) is linked at Asn-68. The N-linked (GlcNAc...) asparagine glycan is linked to Asn-199. Residues Asn-294 and Asn-314 are each glycosylated (N-linked (GlcNAc...) asparagine). LRR repeat units lie at residues 318-341 (TVRLESLTLTGTKISSISNNLCQE), 342-363 (QKRLRTLDLSYNSIKDLPSFNG), 364-387 (CHALEEISLQRNQIHQIKEDTFQG), 388-411 (LTSLKILDLSRNLIHEIDDRAFAK), and 413-435 (GSITNLDVSFNELTSFPTEGLNG). A disulfide bond links Cys-339 and Cys-364. Disulfide bonds link Cys-470/Cys-522 and Cys-471/Cys-476. A helical transmembrane segment spans residues 545 to 565 (VWFIFLVALFFNLLVILTTFA). Over 566–575 (SCTSVPSSKL) the chain is Cytoplasmic. The helical transmembrane segment at 576-596 (FIGLISVSNLFMGAYTGILTF) threads the bilayer. At 597–619 (LDAVSWGRFAEFGIWWEIGSGCK) the chain is on the extracellular side. Cys-618 and Cys-693 are oxidised to a cystine. The chain crosses the membrane as a helical span at residues 620–640 (IAGFLAVFSSESAIFLLMLAA). Residues 641–661 (VERSLSAKDMMKNGKSNHLRQ) are Cytoplasmic-facing. Residues 662–682 (FRIAALLAFLGAAVAGSFPLF) traverse the membrane as a helical segment. Residues 683-703 (HRGEYSASPLCLPFPTGETPS) are Extracellular-facing. Residues 704–724 (LGFTVTLVLLNSLAFLLMAII) form a helical membrane-spanning segment. The Cytoplasmic portion of the chain corresponds to 725-756 (YTKLYCNLEKEDLSESSQSSMIKHVAWLIFTN). A helical membrane pass occupies residues 757 to 777 (CIFFCPVAFFSFAPLITAVSI). Topologically, residues 778–783 (SPEIMK) are extracellular. A helical transmembrane segment spans residues 784 to 804 (SVTLIFFPLPACLNPVLYVFF). Residues 805–951 (NPKFKEDWKL…YAYNLPRVKD (147 aa)) lie on the Cytoplasmic side of the membrane. Ser-920 carries the phosphoserine modification.

It belongs to the G-protein coupled receptor 1 family.

It localises to the cell membrane. Functionally, receptor for R-spondins that potentiates the canonical Wnt signaling pathway and is involved in the formation of various organs. Upon binding to R-spondins (RSPO1, RSPO2, RSPO3 or RSPO4), associates with phosphorylated LRP6 and frizzled receptors that are activated by extracellular Wnt receptors, triggering the canonical Wnt signaling pathway to increase expression of target genes. In contrast to classical G-protein coupled receptors, does not activate heterotrimeric G-proteins to transduce the signal. Its function as activator of the Wnt signaling pathway is required for the development of various organs, including liver, kidney, intestine, bone, reproductive tract and eye. May also act as a receptor for norrin (NDP), such results however required additional confirmation in vivo. Required during spermatogenesis to activate the Wnt signaling pathway in peritubular myoid cells. Required for the maintenance of intestinal stem cells and Paneth cell differentiation in postnatal intestinal crypts. Acts as a regulator of bone formation and remodeling. Involved in kidney development; required for maintaining the ureteric bud in an undifferentiated state. Involved in the development of the anterior segment of the eye. Required during erythropoiesis. Also acts as a negative regulator of innate immunity by inhibiting TLR2/TLR4 associated pattern-recognition and pro-inflammatory cytokine production. Plays an important role in regulating the circadian rhythms of plasma lipids, partially through regulating the rhythmic expression of MTTP. Required for proper development of GnRH neurons (gonadotropin-releasing hormone expressing neurons) that control the release of reproductive hormones from the pituitary gland. In Bos taurus (Bovine), this protein is Leucine-rich repeat-containing G-protein coupled receptor 4 (LGR4).